The primary structure comprises 444 residues: Acetyl-CoA--deacetylcephalosporin C acetyltransferase (444 aa).

A propeptide spanning residues 1-71 (MLPSAQVARL…PQIANRFEAS (71 aa)) is cleaved from the precursor. The 314-residue stretch at 112–425 (VIVCHTLTSS…DTNEGHDFFV (314 aa)) folds into the AB hydrolase-1 domain. Residues S208 and H421 contribute to the active site.

The protein belongs to the AB hydrolase superfamily. MetX family. In terms of assembly, heterodimer of chain I and chain II.

It catalyses the reaction deacetylcephalosporin C + acetyl-CoA = cephalosporin C + CoA. The protein operates within antibiotic biosynthesis; cephalosporin C biosynthesis. Its function is as follows. Catalyzes the conversion of deacetylcephalosporin C to cephalosporin C. In Hapsidospora chrysogena (Acremonium chrysogenum), this protein is Acetyl-CoA--deacetylcephalosporin C acetyltransferase (CEFG).